The sequence spans 377 residues: Ribosomal RNA large subunit methyltransferase G (377 aa).

This sequence belongs to the methyltransferase superfamily. RlmG family.

The protein localises to the cytoplasm. The catalysed reaction is guanosine(1835) in 23S rRNA + S-adenosyl-L-methionine = N(2)-methylguanosine(1835) in 23S rRNA + S-adenosyl-L-homocysteine + H(+). In terms of biological role, specifically methylates the guanine in position 1835 (m2G1835) of 23S rRNA. The protein is Ribosomal RNA large subunit methyltransferase G of Shewanella oneidensis (strain ATCC 700550 / JCM 31522 / CIP 106686 / LMG 19005 / NCIMB 14063 / MR-1).